A 469-amino-acid polypeptide reads, in one-letter code: Dynein axonemal assembly factor 3 (469 aa).

The interval 313 to 356 (RSPLNEDPPNTSSSCCQSTESRKTEENSQSDPSASQTQPVEHSP) is disordered. 2 stretches are compositionally biased toward polar residues: residues 320-331 (PPNTSSSCCQST) and 339-356 (NSQS…EHSP).

This sequence belongs to the DNAAF3 family. Mainly expressed in cell types that express axonemal dyneins.

It localises to the cytoplasm. The protein localises to the dynein axonemal particle. Its function is as follows. Required for the assembly of axonemal inner and outer dynein arms. Involved in preassembly of dyneins into complexes before their transport into cilia. The chain is Dynein axonemal assembly factor 3 (dnaaf3) from Danio rerio (Zebrafish).